Here is a 781-residue protein sequence, read N- to C-terminus: LPS-assembly protein LptD (781 aa).

Positions 1-24 are cleaved as a signal peptide; it reads MKKNYYTVLSLSILTALYSTSSQA.

It belongs to the LptD family. In terms of assembly, component of the lipopolysaccharide transport and assembly complex. Interacts with LptE and LptA.

The protein localises to the cell outer membrane. In terms of biological role, together with LptE, is involved in the assembly of lipopolysaccharide (LPS) at the surface of the outer membrane. The chain is LPS-assembly protein LptD from Histophilus somni (strain 129Pt) (Haemophilus somnus).